A 451-amino-acid chain; its full sequence is Medium-chain fatty acid ethyl ester synthase/esterase 2 (451 aa).

Residue Lys-114 forms a Glycyl lysine isopeptide (Lys-Gly) (interchain with G-Cter in ubiquitin) linkage. An AB hydrolase-1 domain is found at 166 to 430 (PLVVILHGLA…GGHLAYLDKD (265 aa)). Residues Ser-247, Asp-395, and His-423 each act as charge relay system in the active site.

Belongs to the AB hydrolase superfamily. AB hydrolase 4 family.

It carries out the reaction an aliphatic alcohol + acetyl-CoA = an acetyl ester + CoA. In terms of biological role, displays enzymatic activity both for medium-chain fatty acid (MCFA) ethyl ester synthesis and hydrolysis (esterase activity). MCFA are toxic for yeast and this enzyme could thus be involved in their detoxification by esterification. The chain is Medium-chain fatty acid ethyl ester synthase/esterase 2 (EHT1) from Saccharomyces cerevisiae (strain ATCC 204508 / S288c) (Baker's yeast).